The following is a 124-amino-acid chain: Small ribosomal subunit protein uS12 (124 aa).

Aspartate 89 carries the post-translational modification 3-methylthioaspartic acid. Residues 105–124 (QGVKNRGQARSRYGAKKEKK) form a disordered region. Residues 111–124 (GQARSRYGAKKEKK) are compositionally biased toward basic residues.

This sequence belongs to the universal ribosomal protein uS12 family. As to quaternary structure, part of the 30S ribosomal subunit. Contacts proteins S8 and S17. May interact with IF1 in the 30S initiation complex.

Functionally, with S4 and S5 plays an important role in translational accuracy. Interacts with and stabilizes bases of the 16S rRNA that are involved in tRNA selection in the A site and with the mRNA backbone. Located at the interface of the 30S and 50S subunits, it traverses the body of the 30S subunit contacting proteins on the other side and probably holding the rRNA structure together. The combined cluster of proteins S8, S12 and S17 appears to hold together the shoulder and platform of the 30S subunit. This Micrococcus luteus (Micrococcus lysodeikticus) protein is Small ribosomal subunit protein uS12.